Consider the following 116-residue polypeptide: Putative RNase MJ0125 (116 aa).

Residues arginine 76 and histidine 81 contribute to the active site. Positions 76 to 83 match the RX(4)HXY motif motif; it reads RDKLIHQY. At tyrosine 83 the chain carries O-di-AMP-tyrosine.

Belongs to the HepT RNase toxin family. In terms of assembly, homodimer, probably forms a complex with cognate antitoxin MJ0126. Modified by cognate antitoxin MJ0126; probably at least 2 successive AMPylation events occur on Tyr-83.

Its function is as follows. Probable toxic component of a putative type VII toxin-antitoxin (TA) system, probably an RNase. Probably neutralized by cognate antitoxin MJ0126. Neutralization may be due to AMPylation by MJ0126. The protein is Putative RNase MJ0125 of Methanocaldococcus jannaschii (strain ATCC 43067 / DSM 2661 / JAL-1 / JCM 10045 / NBRC 100440) (Methanococcus jannaschii).